Consider the following 436-residue polypeptide: Methanethiol oxidase (436 aa).

A signal peptide spans Met-1 to Ala-24.

Belongs to the selenium-binding protein family.

It is found in the periplasm. The catalysed reaction is methanethiol + O2 + H2O = hydrogen sulfide + formaldehyde + H2O2 + H(+). The protein operates within organosulfur degradation. Its function is as follows. Catalyzes the oxidation of methanethiol. This is Methanethiol oxidase from Ruegeria pomeroyi (strain ATCC 700808 / DSM 15171 / DSS-3) (Silicibacter pomeroyi).